The primary structure comprises 320 residues: Aminoacyl tRNA synthase complex-interacting multifunctional protein 2 (320 aa).

The tract at residues 31–52 (HSKTTSPATDAGHVQETSEPSL) is disordered. Ser36 carries the post-translational modification Phosphoserine. The tract at residues 82–162 (TPDADLDVTN…HTHSSVKNVP (81 aa)) is interaction with PRKN. The tract at residues 162 to 225 (PENLLKCFGE…FLFSLFGQKH (64 aa)) is interaction with TP53. Residues 220–317 (LFGQKHSAVN…NLVPFSTALQ (98 aa)) form the GST C-terminal domain.

In terms of assembly, part of the multisynthetase complex (MSC), a multisubunit complex that groups tRNA ligases for Arg (RARS1), Asp (DARS1), Gln (QARS1), Ile (IARS1), Leu (LARS1), Lys (KARS1), Met (MARS1) the bifunctional ligase for Glu and Pro (EPRS1) and the auxiliary subunits AIMP1/p43, AIMP2/p38 and EEF1E1/p18. Interacts (via N-terminus) with KARS1. Interacts with EPRS1. Forms a linear complex that contains MARS1, EEF1E1, EPRS1 and AIMP2 that is at the core of the multisubunit complex. Binds FUBP1 (via C-terminus). Interacts in both its unphosphorylated and phosphorylated forms with p53/TP53 (via N-terminus) in the nucleus following UV irradiation. Interacts (via N-terminus) with PRKN/parkin (via first RING-type domain). Interacts with TARS3. Phosphorylated on serine residues in response to UV irradiation. Post-translationally, ubiquitinated by PRKN, leading to its degradation by the proteasome.

It is found in the cytoplasm. The protein resides in the cytosol. The protein localises to the nucleus. Functionally, required for assembly and stability of the aminoacyl-tRNA synthase complex. Mediates ubiquitination and degradation of FUBP1, a transcriptional activator of MYC, leading to MYC down-regulation which is required for aveolar type II cell differentiation. Blocks MDM2-mediated ubiquitination and degradation of p53/TP53. Functions as a proapoptotic factor. The chain is Aminoacyl tRNA synthase complex-interacting multifunctional protein 2 (AIMP2) from Cricetulus griseus (Chinese hamster).